The following is a 559-amino-acid chain: Glucosylglycerate phosphorylase (559 aa).

Aspartate 229 acts as the Nucleophile in catalysis.

The protein belongs to the glycosyl hydrolase 13 family. Glucosylglycerate phosphorylase subfamily.

The enzyme catalyses (2R)-2-O-(alpha-D-glucopyranosyl)-glycerate + phosphate = (R)-glycerate + alpha-D-glucose 1-phosphate. Its function is as follows. Catalyzes the reversible phosphorolysis of glucosylglycerate into alpha-D-glucose 1-phosphate (Glc1P) and D-glycerate (also called (R)-glycerate). May be a regulator of intracellular levels of glucosylglycerate, a compatible solute that primarily protects organisms facing salt stress and very specific nutritional constraints. Cannot catalyze the phosphorolysis of sucrose. Does not act on other sugars such as alpha-D-galactose 1-phosphate, alpha-D-mannose 1-phosphate or beta-D-glucose 1-phosphate; in vitro D-erythronate can substitute for D-glycerate with a much lower efficiency. This Escherichia coli (strain K12) protein is Glucosylglycerate phosphorylase (ycjM).